A 322-amino-acid polypeptide reads, in one-letter code: Probable transposase for insertion sequence element ISA1214 (322 aa).

This sequence belongs to the transposase 11 family.

Functionally, involved in the transposition of the insertion sequence ISA1214. In Archaeoglobus fulgidus (strain ATCC 49558 / DSM 4304 / JCM 9628 / NBRC 100126 / VC-16), this protein is Probable transposase for insertion sequence element ISA1214.